The following is a 222-amino-acid chain: Recombination protein RecR (222 aa).

Residues 57-72 (CPVCFNITDAERCDVC) form a C4-type zinc finger. A Toprim domain is found at 80–173 (SVICVVEEPG…VVSRIAYGLP (94 aa)). The tract at residues 189-222 (ALSGRRRVSEPASPPPPRRNDEEQDGAPARPPSH) is disordered.

Belongs to the RecR family.

In terms of biological role, may play a role in DNA repair. It seems to be involved in an RecBC-independent recombinational process of DNA repair. It may act with RecF and RecO. This is Recombination protein RecR from Deinococcus geothermalis (strain DSM 11300 / CIP 105573 / AG-3a).